A 195-amino-acid chain; its full sequence is MSEIKLIVGLANPGAEYAQTRHNAGAWYVQELARICGVTLVPDSKYFGLTARAVLQGKDVRLLIPTTYMNLSGKAVGALANFFRITPEEILVAHDELDMPPGVAKFKLGGGHGGHNGLKDIIAKLANDKNFYRLRIGIGHPGDKNQVSGYVLGKAPAKEQELIEAAIDEAVRSTEILYKENMVKAMTRLHSFKAE.

Tyr17 provides a ligand contact to tRNA. His22 serves as the catalytic Proton acceptor. TRNA is bound by residues Tyr68, Asn70, and Asn116.

It belongs to the PTH family. In terms of assembly, monomer.

The protein resides in the cytoplasm. The catalysed reaction is an N-acyl-L-alpha-aminoacyl-tRNA + H2O = an N-acyl-L-amino acid + a tRNA + H(+). Functionally, hydrolyzes ribosome-free peptidyl-tRNAs (with 1 or more amino acids incorporated), which drop off the ribosome during protein synthesis, or as a result of ribosome stalling. In terms of biological role, catalyzes the release of premature peptidyl moieties from peptidyl-tRNA molecules trapped in stalled 50S ribosomal subunits, and thus maintains levels of free tRNAs and 50S ribosomes. This chain is Peptidyl-tRNA hydrolase, found in Shewanella putrefaciens (strain CN-32 / ATCC BAA-453).